Here is a 341-residue protein sequence, read N- to C-terminus: Ferredoxin--NADP reductase (341 aa).

FAD contacts are provided by D38, Q46, Y51, V91, F125, D292, and T333.

It belongs to the ferredoxin--NADP reductase type 2 family. As to quaternary structure, homodimer. FAD is required as a cofactor.

It catalyses the reaction 2 reduced [2Fe-2S]-[ferredoxin] + NADP(+) + H(+) = 2 oxidized [2Fe-2S]-[ferredoxin] + NADPH. This is Ferredoxin--NADP reductase from Gluconacetobacter diazotrophicus (strain ATCC 49037 / DSM 5601 / CCUG 37298 / CIP 103539 / LMG 7603 / PAl5).